The primary structure comprises 300 residues: Protoheme IX farnesyltransferase (300 aa).

The next 9 membrane-spanning stretches (helical) occupy residues 24–44 (VTQL…PGMV), 46–66 (WHVL…AFAI), 94–114 (PQIL…LYTF), 118–138 (LTMW…TLLL), 146–166 (IVIG…AVTG), 172–192 (AWIL…VLAL), 217–237 (LHIL…FISG), 239–259 (SGAV…AYAW), and 278–298 (IVYL…RPLL).

This sequence belongs to the UbiA prenyltransferase family. Protoheme IX farnesyltransferase subfamily.

It localises to the cell inner membrane. It catalyses the reaction heme b + (2E,6E)-farnesyl diphosphate + H2O = Fe(II)-heme o + diphosphate. The protein operates within porphyrin-containing compound metabolism; heme O biosynthesis; heme O from protoheme: step 1/1. Converts heme B (protoheme IX) to heme O by substitution of the vinyl group on carbon 2 of heme B porphyrin ring with a hydroxyethyl farnesyl side group. The polypeptide is Protoheme IX farnesyltransferase (Burkholderia cenocepacia (strain HI2424)).